Reading from the N-terminus, the 722-residue chain is Glycine--tRNA ligase beta subunit (722 aa).

The protein belongs to the class-II aminoacyl-tRNA synthetase family. In terms of assembly, tetramer of two alpha and two beta subunits.

It is found in the cytoplasm. The catalysed reaction is tRNA(Gly) + glycine + ATP = glycyl-tRNA(Gly) + AMP + diphosphate. This chain is Glycine--tRNA ligase beta subunit, found in Haemophilus influenzae (strain 86-028NP).